Here is a 345-residue protein sequence, read N- to C-terminus: Fructose-1,6-bisphosphatase class 1 (345 aa).

Residues Glu-90, Asp-109, Leu-111, and Asp-112 each contribute to the Mg(2+) site. Residues 112-115 (DGSS) and Asn-200 each bind substrate. Residue Glu-272 participates in Mg(2+) binding.

The protein belongs to the FBPase class 1 family. In terms of assembly, homotetramer. Mg(2+) serves as cofactor.

Its subcellular location is the cytoplasm. The catalysed reaction is beta-D-fructose 1,6-bisphosphate + H2O = beta-D-fructose 6-phosphate + phosphate. It participates in carbohydrate biosynthesis; gluconeogenesis. The sequence is that of Fructose-1,6-bisphosphatase class 1 from Bradyrhizobium diazoefficiens (strain JCM 10833 / BCRC 13528 / IAM 13628 / NBRC 14792 / USDA 110).